Consider the following 706-residue polypeptide: Protein kinase C theta type (706 aa).

The region spanning 1-107 (MSPFLRIGLS…KNNGKTEIWL (107 aa)) is the C2 domain. Y90 is modified (phosphotyrosine; by LCK). The Phorbol-ester/DAG-type 1 zinc finger occupies 159–209 (CHEFTATFFPQPTFCSVCHEFVWGLNKQGYQCRQCNAAIHKKCIDKVIAKC). T219 carries the post-translational modification Phosphothreonine; by autocatalysis. The Phorbol-ester/DAG-type 2 zinc-finger motif lies at 231 to 281 (PHRFKVYNYKSPTFCEHCGTLLWGLARQGLKCDACGMNVHHRCQTKVANLC). Phosphoserine is present on S348. One can recognise a Protein kinase domain in the interval 380-634 (FILHKMLGKG…RGDIRQHPLF (255 aa)). ATP-binding positions include 386-394 (LGKGSFGKV) and K409. The Proton acceptor role is filled by D504. T538 is subject to Phosphothreonine; by PDPK1. Residues 635 to 706 (REINWEELER…MNPGMERLIS (72 aa)) enclose the AGC-kinase C-terminal domain. S676, S685, and S695 each carry phosphoserine.

It belongs to the protein kinase superfamily. AGC Ser/Thr protein kinase family. PKC subfamily. In terms of assembly, part of a lipid raft complex composed at least of BCL10, CARD11, MALT1 and IKBKB. Interacts with GLRX3 (via N-terminus). Interacts with ECT2. Interacts with CCDC88A/GIV; the interaction leads to phosphorylation of CCDC88A and inhibition of its guanine nucleotide exchange factor activity. Interacts with PRKCH upstream open reading frame 2; the interaction leads to inhibition of kinase activity. Interacts with CD28. The cofactor is Mg(2+). In terms of processing, autophosphorylation at Thr-219 is required for targeting to the TCR and cellular function of PRKCQ upon antigen receptor ligation. Following TCR stimulation, phosphorylated at Tyr-90 and Ser-685. Expressed in skeletal muscle, T-cells, megakaryoblastic cells and platelets.

It is found in the cytoplasm. The protein resides in the cell membrane. It carries out the reaction L-seryl-[protein] + ATP = O-phospho-L-seryl-[protein] + ADP + H(+). It catalyses the reaction L-threonyl-[protein] + ATP = O-phospho-L-threonyl-[protein] + ADP + H(+). With respect to regulation, novel PKCs (PRKCD, PRKCE, PRKCH and PRKCQ) are calcium-insensitive, but activated by diacylglycerol (DAG) and phosphatidylserine. Three specific sites; Thr-538 (activation loop of the kinase domain), Ser-676 (turn motif) and Ser-695 (hydrophobic region), need to be phosphorylated for its full activation. Inhibited by PRKCH upstream open reading frame 2. Calcium-independent, phospholipid- and diacylglycerol (DAG)-dependent serine/threonine-protein kinase that mediates non-redundant functions in T-cell receptor (TCR) signaling, including T-cells activation, proliferation, differentiation and survival, by mediating activation of multiple transcription factors such as NF-kappa-B, JUN, NFATC1 and NFATC2. In TCR-CD3/CD28-co-stimulated T-cells, is required for the activation of NF-kappa-B and JUN, which in turn are essential for IL2 production, and participates in the calcium-dependent NFATC1 and NFATC2 transactivation. Mediates the activation of the canonical NF-kappa-B pathway (NFKB1) by direct phosphorylation of CARD11 on several serine residues, inducing CARD11 association with lipid rafts and recruitment of the BCL10-MALT1 complex, which then activates IKK complex, resulting in nuclear translocation and activation of NFKB1. May also play an indirect role in activation of the non-canonical NF-kappa-B (NFKB2) pathway. In the signaling pathway leading to JUN activation, acts by phosphorylating the mediator STK39/SPAK and may not act through MAP kinases signaling. Plays a critical role in TCR/CD28-induced NFATC1 and NFATC2 transactivation by participating in the regulation of reduced inositol 1,4,5-trisphosphate generation and intracellular calcium mobilization. After costimulation of T-cells through CD28 can phosphorylate CBLB and is required for the ubiquitination and subsequent degradation of CBLB, which is a prerequisite for the activation of TCR. During T-cells differentiation, plays an important role in the development of T-helper 2 (Th2) cells following immune and inflammatory responses, and, in the development of inflammatory autoimmune diseases, is necessary for the activation of IL17-producing Th17 cells. May play a minor role in Th1 response. Upon TCR stimulation, mediates T-cell protective survival signal by phosphorylating BAD, thus protecting T-cells from BAD-induced apoptosis, and by up-regulating BCL-X(L)/BCL2L1 levels through NF-kappa-B and JUN pathways. In platelets, regulates signal transduction downstream of the ITGA2B, CD36/GP4, F2R/PAR1 and F2RL3/PAR4 receptors, playing a positive role in 'outside-in' signaling and granule secretion signal transduction. May relay signals from the activated ITGA2B receptor by regulating the uncoupling of WASP and WIPF1, thereby permitting the regulation of actin filament nucleation and branching activity of the Arp2/3 complex. May mediate inhibitory effects of free fatty acids on insulin signaling by phosphorylating IRS1, which in turn blocks IRS1 tyrosine phosphorylation and downstream activation of the PI3K/AKT pathway. Phosphorylates MSN (moesin) in the presence of phosphatidylglycerol or phosphatidylinositol. Phosphorylates PDPK1 at 'Ser-504' and 'Ser-532' and negatively regulates its ability to phosphorylate PKB/AKT1. Phosphorylates CCDC88A/GIV and inhibits its guanine nucleotide exchange factor activity. Phosphorylates and activates LRRK1, which phosphorylates RAB proteins involved in intracellular trafficking. The sequence is that of Protein kinase C theta type (PRKCQ) from Homo sapiens (Human).